Reading from the N-terminus, the 325-residue chain is Elongation factor P--(R)-beta-lysine ligase (325 aa).

76–78 (SPE) provides a ligand contact to substrate. Residues 100–102 (RNE) and Asn-109 each bind ATP. Tyr-118 is a binding site for substrate. 244-245 (EL) lines the ATP pocket. Glu-251 lines the substrate pocket. Gly-300 contacts ATP.

Belongs to the class-II aminoacyl-tRNA synthetase family. EpmA subfamily. In terms of assembly, homodimer.

It carries out the reaction D-beta-lysine + L-lysyl-[protein] + ATP = N(6)-((3R)-3,6-diaminohexanoyl)-L-lysyl-[protein] + AMP + diphosphate + H(+). Functionally, with EpmB is involved in the beta-lysylation step of the post-translational modification of translation elongation factor P (EF-P) on 'Lys-34'. Catalyzes the ATP-dependent activation of (R)-beta-lysine produced by EpmB, forming a lysyl-adenylate, from which the beta-lysyl moiety is then transferred to the epsilon-amino group of EF-P 'Lys-34'. The polypeptide is Elongation factor P--(R)-beta-lysine ligase (Escherichia fergusonii (strain ATCC 35469 / DSM 13698 / CCUG 18766 / IAM 14443 / JCM 21226 / LMG 7866 / NBRC 102419 / NCTC 12128 / CDC 0568-73)).